Reading from the N-terminus, the 317-residue chain is Aspartate carbamoyltransferase catalytic subunit (317 aa).

Carbamoyl phosphate is bound by residues arginine 66 and threonine 67. An L-aspartate-binding site is contributed by lysine 94. Residues arginine 116, histidine 144, and glutamine 147 each coordinate carbamoyl phosphate. The L-aspartate site is built by arginine 177 and arginine 231. Residues glycine 272 and proline 273 each contribute to the carbamoyl phosphate site.

Belongs to the aspartate/ornithine carbamoyltransferase superfamily. ATCase family. Heterododecamer (2C3:3R2) of six catalytic PyrB chains organized as two trimers (C3), and six regulatory PyrI chains organized as three dimers (R2).

It catalyses the reaction carbamoyl phosphate + L-aspartate = N-carbamoyl-L-aspartate + phosphate + H(+). The protein operates within pyrimidine metabolism; UMP biosynthesis via de novo pathway; (S)-dihydroorotate from bicarbonate: step 2/3. In terms of biological role, catalyzes the condensation of carbamoyl phosphate and aspartate to form carbamoyl aspartate and inorganic phosphate, the committed step in the de novo pyrimidine nucleotide biosynthesis pathway. This is Aspartate carbamoyltransferase catalytic subunit from Rhodopseudomonas palustris (strain BisB5).